Here is a 230-residue protein sequence, read N- to C-terminus: Flagellar L-ring protein (230 aa).

Residues Met-1–Gly-18 form the signal peptide. Cys-19 carries N-palmitoyl cysteine lipidation. A lipid anchor (S-diacylglycerol cysteine) is attached at Cys-19.

It belongs to the FlgH family. In terms of assembly, the basal body constitutes a major portion of the flagellar organelle and consists of four rings (L,P,S, and M) mounted on a central rod.

The protein localises to the cell outer membrane. It localises to the bacterial flagellum basal body. Its function is as follows. Assembles around the rod to form the L-ring and probably protects the motor/basal body from shearing forces during rotation. This chain is Flagellar L-ring protein, found in Legionella pneumophila (strain Corby).